Consider the following 326-residue polypeptide: Nitrogen metabolite regulation-like protein bik4 (326 aa).

NADP(+) is bound by residues Gly-13–Val-18 and Phe-161–Asn-164.

It belongs to the NmrA-type oxidoreductase family.

Functionally, nitrogen metabolite regulation-like protein involved in the regulation of the gene cluster that mediates the biosynthesis of bikaverin, a red pigment also considered as a mycotoxin. This is Nitrogen metabolite regulation-like protein bik4 from Gibberella fujikuroi (strain CBS 195.34 / IMI 58289 / NRRL A-6831) (Bakanae and foot rot disease fungus).